A 427-amino-acid polypeptide reads, in one-letter code: Tol-Pal system protein TolB (427 aa).

The signal sequence occupies residues 1–25 (MKTFAQLRLLLAAAALALLSFSAQA).

This sequence belongs to the TolB family. In terms of assembly, the Tol-Pal system is composed of five core proteins: the inner membrane proteins TolA, TolQ and TolR, the periplasmic protein TolB and the outer membrane protein Pal. They form a network linking the inner and outer membranes and the peptidoglycan layer.

It is found in the periplasm. In terms of biological role, part of the Tol-Pal system, which plays a role in outer membrane invagination during cell division and is important for maintaining outer membrane integrity. This is Tol-Pal system protein TolB from Azoarcus sp. (strain BH72).